The chain runs to 556 residues: PPE family protein PPE2 (556 aa).

A PPE region spans residues A8–A164. The interval Q201–L256 is SH3-like. The segment at L319 to L340 is leucine zipper motif. Disordered regions lie at residues T385 to T418 and G443 to E556. The segment covering P400–V417 has biased composition (pro residues). Positions A456 to P471 are enriched in low complexity. A compositionally biased stretch (basic residues) spans Q472–Q481. The short motif at R473–Q481 is the Nuclear localization signal element.

It belongs to the mycobacterial PPE family.

Its subcellular location is the secreted. The protein localises to the host cytoplasm. It localises to the host nucleus. In terms of biological role, inhibits nitric oxide (NO) production in activated macrophages. Acts by inhibiting expression of the host inducible nitric oxide synthase (iNOS). PPE2 is translocated into the host macrophage nucleus, where it interacts with a GATA-binding site overlapping with the TATA box of NOS2 (iNOS) promoter, and strongly inhibits NOS2 gene transcription. Reduction in NO production in turn facilitates intracellular survival of the bacilli inside the macrophage. In addition, disrupts the assembly of NADPH oxidase complex, which inhibits NADPH oxidase-mediated reactive oxygen species (ROS) generation in macrophages and favors M.tuberculosis survival. Acts by interacting with NCF2, the cytosolic subunit of NADPH oxidase, and preventing translocation of NCF2 and NCF1 to the membrane, which causes a reduction of the functional assembly of NADPH oxidase complex and a decrease in NADPH oxidase activity. The sequence is that of PPE family protein PPE2 (PPE2) from Mycobacterium tuberculosis (strain ATCC 25618 / H37Rv).